The primary structure comprises 123 residues: Nitrogenase-stabilizing/protective protein NifW (123 aa).

The protein belongs to the NifW family. In terms of assembly, homotrimer; associates with NifD.

In terms of biological role, may protect the nitrogenase Fe-Mo protein from oxidative damage. The protein is Nitrogenase-stabilizing/protective protein NifW of Rhodopseudomonas palustris (strain HaA2).